The chain runs to 157 residues: Transcription elongation factor GreA (157 aa).

Belongs to the GreA/GreB family.

In terms of biological role, necessary for efficient RNA polymerase transcription elongation past template-encoded arresting sites. The arresting sites in DNA have the property of trapping a certain fraction of elongating RNA polymerases that pass through, resulting in locked ternary complexes. Cleavage of the nascent transcript by cleavage factors such as GreA or GreB allows the resumption of elongation from the new 3'terminus. GreA releases sequences of 2 to 3 nucleotides. This is Transcription elongation factor GreA from Brucella abortus (strain S19).